Consider the following 80-residue polypeptide: Raniseptin-4 (80 aa).

Residues 1 to 22 form the signal peptide; the sequence is MAFLKKSLFLVLFLGIVSLSIC. Positions 23–49 are excised as a propeptide; sequence EEEKREGEEEEKQEEENEELSEEELRD.

Belongs to the frog skin active peptide (FSAP) family. Dermaseptin subfamily. As to expression, expressed by the skin glands.

It is found in the secreted. Has antibacterial activity. In Boana raniceps (Chaco tree frog), this protein is Raniseptin-4.